Here is a 330-residue protein sequence, read N- to C-terminus: Exostosin-like 2 (330 aa).

At 1–21 (MMRGCHICKLPGRVMGIRVLR) the chain is on the cytoplasmic side. The helical; Signal-anchor for type II membrane protein transmembrane segment at 22 to 42 (FSLVVILVLLLVAGALTNLLP) threads the bilayer. Residues 43–330 (NIKEDKMLTL…FPYANHKSKM (288 aa)) lie on the Lumenal side of the membrane. Residue glutamine 72 coordinates UDP-N-acetyl-alpha-D-galactosamine. Glutamine 72 contributes to the UDP-N-acetyl-alpha-D-glucosamine binding site. N-linked (GlcNAc...) asparagine glycosylation occurs at asparagine 75. 8 residues coordinate UDP-N-acetyl-alpha-D-galactosamine: arginine 76, asparagine 101, asparagine 130, arginine 135, aspartate 151, aspartate 152, aspartate 153, and aspartate 245. Residues arginine 76, asparagine 101, asparagine 130, arginine 135, aspartate 151, aspartate 152, aspartate 153, aspartate 245, aspartate 246, and arginine 293 each contribute to the UDP-N-acetyl-alpha-D-glucosamine site. Aspartate 153 is a Mn(2+) binding site. A disulfide bond links cysteine 244 and cysteine 296. Aspartate 246 is an active-site residue. Residue arginine 293 participates in UDP-N-acetyl-alpha-D-galactosamine binding.

Belongs to the glycosyltransferase 47 family. Requires Mn(2+) as cofactor.

It localises to the endoplasmic reticulum membrane. It catalyses the reaction 3-O-(beta-D-GlcA-(1-&gt;3)-beta-D-Gal-(1-&gt;3)-beta-D-Gal-(1-&gt;4)-beta-D-Xyl)-L-seryl-[protein] + UDP-N-acetyl-alpha-D-glucosamine = 3-O-(alpha-D-GlcNAc-(1-&gt;4)-beta-D-GlcA-(1-&gt;3)-beta-D-Gal-(1-&gt;3)-beta-D-Gal-(1-&gt;4)-beta-D-Xyl)-L-seryl-[protein] + UDP + H(+). Glycosyltransferase required for the biosynthesis of heparan-sulfate and responsible for the alternating addition of beta-1-4-linked glucuronic acid (GlcA) and alpha-1-4-linked N-acetylglucosamine (GlcNAc) units to nascent heparan sulfate chains. This is Exostosin-like 2 (Extl2) from Mus musculus (Mouse).